Consider the following 316-residue polypeptide: Transaldolase (316 aa).

Residue lysine 127 is the Schiff-base intermediate with substrate of the active site.

It belongs to the transaldolase family. Type 2 subfamily.

Its subcellular location is the cytoplasm. It carries out the reaction D-sedoheptulose 7-phosphate + D-glyceraldehyde 3-phosphate = D-erythrose 4-phosphate + beta-D-fructose 6-phosphate. It participates in carbohydrate degradation; pentose phosphate pathway; D-glyceraldehyde 3-phosphate and beta-D-fructose 6-phosphate from D-ribose 5-phosphate and D-xylulose 5-phosphate (non-oxidative stage): step 2/3. In terms of biological role, transaldolase is important for the balance of metabolites in the pentose-phosphate pathway. In Helicobacter pylori (strain Shi470), this protein is Transaldolase.